The chain runs to 685 residues: Phenoloxidase subunit 1 (685 aa).

The Cu cation site is built by H209, H213, and H239. E351 serves as the catalytic Proton acceptor. The Cu cation site is built by H366, H370, and H406. Disulfide bonds link C580-C622 and C582-C629.

In terms of assembly, heterodimer. Forms a complex with an interleukin 1-like protein as a consequence of a host defense response. The cofactor is Cu(2+). The N-terminus is blocked. As to expression, synthesized by oenocytoids, a type of hemocyte, and released into the hemolymph plasma.

The protein localises to the secreted. The enzyme catalyses 2 L-dopa + O2 = 2 L-dopaquinone + 2 H2O. It catalyses the reaction L-tyrosine + O2 = L-dopaquinone + H2O. Its activity is regulated as follows. Activated by immulectin and lipopolysaccharide. Functionally, this is a copper-containing oxidase that functions in the formation of pigments such as melanins and other polyphenolic compounds. Catalyzes the rate-limiting conversions of tyrosine to DOPA, DOPA to DOPA-quinone and possibly 5,6 dihydroxyindole to indole-5'6 quinone. Binds to the surface of hemocytes and is involved in hemocyte melanization. In Manduca sexta (Tobacco hawkmoth), this protein is Phenoloxidase subunit 1.